A 520-amino-acid chain; its full sequence is Succinyl-CoA:3-ketoacid coenzyme A transferase 2B, mitochondrial (520 aa).

The N-terminal 39 residues, 1-39 (MAALRLLAWALPRGVSALRPRPALPHRLIRRYVSDRSGS), are a transit peptide targeting the mitochondrion. The interval 280 to 299 (ERLTTRDSKPAPGSKDNDPS) is disordered. The 5-glutamyl coenzyme A thioester intermediate role is filled by glutamate 342.

The protein belongs to the 3-oxoacid CoA-transferase family. Homodimer. As to expression, testis specific. Expressed in late spermatids. Accumulates during spermiogenesis. Also detected in the midpiece of spermatozoa.

It is found in the mitochondrion. It carries out the reaction a 3-oxo acid + succinyl-CoA = a 3-oxoacyl-CoA + succinate. Its pathway is ketone metabolism; succinyl-CoA degradation; acetoacetyl-CoA from succinyl-CoA: step 1/1. Key enzyme for ketone body catabolism. Transfers the CoA moiety from succinate to acetoacetate. Formation of the enzyme-CoA intermediate proceeds via an unstable anhydride species formed between the carboxylate groups of the enzyme and substrate. Probably play and important roles in the energy metabolism of spermatozoa. The polypeptide is Succinyl-CoA:3-ketoacid coenzyme A transferase 2B, mitochondrial (Oxct2b) (Mus musculus (Mouse)).